Here is a 569-residue protein sequence, read N- to C-terminus: BTB/POZ domain-containing protein At3g50840 (569 aa).

Residues 18-87 enclose the BTB domain; the sequence is SDIEIEVDDI…SYGFKVDISV (70 aa). Residues 194-459 enclose the NPH3 domain; it reads ELWFEDLTEL…VQVLFLEQLQ (266 aa). The segment covering 240 to 259 has biased composition (low complexity); that stretch reads ISRSSSASSSSSSSSTTIAS. Residues 240-261 form a disordered region; it reads ISRSSSASSSSSSSSTTIASEN. At Y400 the chain carries Phosphotyrosine.

This sequence belongs to the NPH3 family.

Its pathway is protein modification; protein ubiquitination. In terms of biological role, may act as a substrate-specific adapter of an E3 ubiquitin-protein ligase complex (CUL3-RBX1-BTB) which mediates the ubiquitination and subsequent proteasomal degradation of target proteins. This chain is BTB/POZ domain-containing protein At3g50840, found in Arabidopsis thaliana (Mouse-ear cress).